Reading from the N-terminus, the 438-residue chain is Asparagine--tRNA ligase (438 aa).

The protein belongs to the class-II aminoacyl-tRNA synthetase family. Homodimer.

It localises to the cytoplasm. It carries out the reaction tRNA(Asn) + L-asparagine + ATP = L-asparaginyl-tRNA(Asn) + AMP + diphosphate + H(+). The sequence is that of Asparagine--tRNA ligase from Thermus thermophilus (strain ATCC BAA-163 / DSM 7039 / HB27).